Here is a 79-residue protein sequence, read N- to C-terminus: Small ribosomal subunit protein bS16 (79 aa).

The protein belongs to the bacterial ribosomal protein bS16 family.

The protein is Small ribosomal subunit protein bS16 of Marinobacter nauticus (strain ATCC 700491 / DSM 11845 / VT8) (Marinobacter aquaeolei).